A 218-amino-acid chain; its full sequence is Protein GrpE (218 aa).

The segment at 1 to 78 (MSEFNKDDYL…DSADTLTPLG (78 aa)) is disordered. Low complexity predominate over residues 14-58 (PDPSDAEAAAQASSGADASAESGSAQDSAAQAPSNEGADAAPAAA).

The protein belongs to the GrpE family. Homodimer.

It is found in the cytoplasm. Functionally, participates actively in the response to hyperosmotic and heat shock by preventing the aggregation of stress-denatured proteins, in association with DnaK and GrpE. It is the nucleotide exchange factor for DnaK and may function as a thermosensor. Unfolded proteins bind initially to DnaJ; upon interaction with the DnaJ-bound protein, DnaK hydrolyzes its bound ATP, resulting in the formation of a stable complex. GrpE releases ADP from DnaK; ATP binding to DnaK triggers the release of the substrate protein, thus completing the reaction cycle. Several rounds of ATP-dependent interactions between DnaJ, DnaK and GrpE are required for fully efficient folding. The protein is Protein GrpE of Bifidobacterium longum (strain NCC 2705).